The chain runs to 126 residues: Aspartate 1-decarboxylase (126 aa).

Ser25 serves as the catalytic Schiff-base intermediate with substrate; via pyruvic acid. Ser25 is subject to Pyruvic acid (Ser). Thr57 contacts substrate. Tyr58 functions as the Proton donor in the catalytic mechanism. Residue 73–75 (GSA) coordinates substrate.

The protein belongs to the PanD family. As to quaternary structure, heterooctamer of four alpha and four beta subunits. Requires pyruvate as cofactor. Post-translationally, is synthesized initially as an inactive proenzyme, which is activated by self-cleavage at a specific serine bond to produce a beta-subunit with a hydroxyl group at its C-terminus and an alpha-subunit with a pyruvoyl group at its N-terminus.

It localises to the cytoplasm. The enzyme catalyses L-aspartate + H(+) = beta-alanine + CO2. Its pathway is cofactor biosynthesis; (R)-pantothenate biosynthesis; beta-alanine from L-aspartate: step 1/1. Its function is as follows. Catalyzes the pyruvoyl-dependent decarboxylation of aspartate to produce beta-alanine. The polypeptide is Aspartate 1-decarboxylase (Acidovorax ebreus (strain TPSY) (Diaphorobacter sp. (strain TPSY))).